The sequence spans 132 residues: Ribonuclease VapC15 (132 aa).

One can recognise a PINc domain in the interval 1-121 (MIVDTSVWIA…HRDRDYEAIR (121 aa)). Asp96 contacts Mg(2+). Mn(2+) is bound by residues Asp96, Asp114, and Asp116.

The protein belongs to the PINc/VapC protein family. As to quaternary structure, crystallizes as a VapB15-VapC15(2) heterotrimer and as a VapB15(2)-VapC15(2) heterotetramer; each toxin pair forms a homodimer which creates a channel in which the antitoxin binds. Mg(2+) serves as cofactor. It depends on Mn(2+) as a cofactor.

Its activity is regulated as follows. RNase activity inhibited by EDTA. In terms of biological role, toxic component of a type II toxin-antitoxin (TA) system. Degrades total E.coli RNA, which is partially inhibited by cognate antitoxin VapB15. Upon expression in M.smegmatis inhibits colony formation, which is neutralized by coexpression with VapB15. The sequence is that of Ribonuclease VapC15 from Mycobacterium tuberculosis (strain ATCC 25618 / H37Rv).